The chain runs to 135 residues: MPTIQQLIRSGRSIKASKTASPALEKCPQKRGVCTRVYTTTPKKPNSALRKVARVRLSNKIEVTAYIPGEGHNLQEHSIVLIRGGRVKDLPGVRYHIVRGSLDTSGVADRKQSRSKYGAKQPKAGAAAPVKGKRR.

Asp89 bears the 3-methylthioaspartic acid mark. The interval 101–135 (SLDTSGVADRKQSRSKYGAKQPKAGAAAPVKGKRR) is disordered. Low complexity predominate over residues 116–135 (KYGAKQPKAGAAAPVKGKRR).

The protein belongs to the universal ribosomal protein uS12 family. Part of the 30S ribosomal subunit. Contacts proteins S8 and S17. May interact with IF1 in the 30S initiation complex.

Functionally, with S4 and S5 plays an important role in translational accuracy. In terms of biological role, interacts with and stabilizes bases of the 16S rRNA that are involved in tRNA selection in the A site and with the mRNA backbone. Located at the interface of the 30S and 50S subunits, it traverses the body of the 30S subunit contacting proteins on the other side and probably holding the rRNA structure together. The combined cluster of proteins S8, S12 and S17 appears to hold together the shoulder and platform of the 30S subunit. The sequence is that of Small ribosomal subunit protein uS12 from Chlorobium phaeobacteroides (strain DSM 266 / SMG 266 / 2430).